Consider the following 56-residue polypeptide: Secreted virulence factor CLU5a (56 aa).

The signal sequence occupies residues 1–18 (MKVSLTLLATLCASLASA).

It belongs to the MC69 virulence factor family. As to quaternary structure, homodimer; disulfide-linked. Dimerization can possibly extend to multimerisation.

It is found in the secreted. Secreted protein required for appressorial penetration of intact host epidermal cells and for pathogenicit, but not for subsequent biotrophic and necrotrophic colonization of leaves. The sequence is that of Secreted virulence factor CLU5a from Colletotrichum graminicola (strain M1.001 / M2 / FGSC 10212) (Maize anthracnose fungus).